We begin with the raw amino-acid sequence, 448 residues long: Argininosuccinate synthase (448 aa).

Residues 17–25 (AFSGGLDTS) and A43 each bind ATP. Y99 contacts L-citrulline. G129 and T131 together coordinate ATP. The L-aspartate site is built by T131, N135, and D136. An L-citrulline-binding site is contributed by N135. D136 is a binding site for ATP. 2 residues coordinate L-citrulline: R139 and S192. D194 provides a ligand contact to ATP. L-citrulline-binding residues include T201, E203, and E280.

The protein belongs to the argininosuccinate synthase family. Type 2 subfamily. Homotetramer.

The protein resides in the cytoplasm. It carries out the reaction L-citrulline + L-aspartate + ATP = 2-(N(omega)-L-arginino)succinate + AMP + diphosphate + H(+). It functions in the pathway amino-acid biosynthesis; L-arginine biosynthesis; L-arginine from L-ornithine and carbamoyl phosphate: step 2/3. In Pectobacterium atrosepticum (strain SCRI 1043 / ATCC BAA-672) (Erwinia carotovora subsp. atroseptica), this protein is Argininosuccinate synthase.